The primary structure comprises 339 residues: Phosphate acyltransferase (339 aa).

Belongs to the PlsX family. In terms of assembly, homodimer. Probably interacts with PlsY.

Its subcellular location is the cytoplasm. It catalyses the reaction a fatty acyl-[ACP] + phosphate = an acyl phosphate + holo-[ACP]. It participates in lipid metabolism; phospholipid metabolism. In terms of biological role, catalyzes the reversible formation of acyl-phosphate (acyl-PO(4)) from acyl-[acyl-carrier-protein] (acyl-ACP). This enzyme utilizes acyl-ACP as fatty acyl donor, but not acyl-CoA. In Helicobacter pylori (strain J99 / ATCC 700824) (Campylobacter pylori J99), this protein is Phosphate acyltransferase.